A 623-amino-acid chain; its full sequence is MRRCTKNSRSTNPPRDPNTLSNYNAFRTTHTTVNFDILFEKQKLTGNVMHKLISLTNLEAREVILDSSFLNIHDVKVDGKQSKFELLPRQEPYGSALKIPLAEGVALSKTLDIDITVETTEKCTALQWLTPAQTSTQKHPYMFTQCQAIHARSIFPCQDTPDVKAVIDFNISSPLPVIASGVPVNDVSSSSSKSKNKVYKFHQKVPIPTYLFAMASGEIAEAPIGPRSRVAASPDKLEECKWELEADTEKFMQAIDKIIFPYIWGEYNVLILPPSFPYGGMENPIFTFATPSVISKDRQNVDVIAHELAHSWSGNLVTNASWEHFWLNEGWTTYLERRILAAVHGEPYRHFSAIIGWKALTESVERYGKDHEFTKLVVDLKGKDPDDAFSSVPYEKGFNFLFYLENLIGKDKFDKFIPHYFTKYKEASLDSYEFKSSILSFFSSDSEAHALLTSFDWDKWFYSPGLPPKPDFDTSLVDIVYALAQKWRTASESGFSPSAVDVNGLVANQLVVFLEQVLVFEKPLSAEQSKLMGDKYGLAKSENAEVLNMYFQVGLKAGDKSVIEPTAAFLSSIGRMKYVRPLYRALDKLDRNIAIEVFEKNKSFYHPICRGLVQKDLFGNKGS.

Residues 1-23 (MRRCTKNSRSTNPPRDPNTLSNY) form a disordered region. The segment covering 7 to 23 (NSRSTNPPRDPNTLSNY) has biased composition (polar residues). Residues 145 to 147 (QCQ) and 277 to 282 (PYGGME) each bind a peptide. Histidine 306 contacts Zn(2+). Glutamate 307 serves as the catalytic Proton acceptor. Zn(2+)-binding residues include histidine 310 and glutamate 329. Tyrosine 394 acts as the Proton donor in catalysis.

This sequence belongs to the peptidase M1 family. The cofactor is Zn(2+).

Its subcellular location is the cytoplasm. The protein localises to the nucleus. It carries out the reaction an epoxide + H2O = an ethanediol. Functionally, aminopeptidase that preferentially cleaves di- and tripeptides. Also has low epoxide hydrolase activity (in vitro). Can hydrolyze the epoxide leukotriene LTA(4) but it forms preferentially 5,6-dihydroxy-7,9,11,14-eicosatetraenoic acid rather than the cytokine leukotriene B(4) as the product compared to the homologous mammalian enzyme (in vitro). The protein is Leucine aminopeptidase 2 of Ajellomyces capsulatus (strain NAm1 / WU24) (Darling's disease fungus).